The primary structure comprises 218 residues: Small ribosomal subunit protein uS3c (218 aa).

The 72-residue stretch at 47–118 (VQKNIRISSG…KLNIAITRIS (72 aa)) folds into the KH type-2 domain.

The protein belongs to the universal ribosomal protein uS3 family. In terms of assembly, part of the 30S ribosomal subunit.

The protein resides in the plastid. The protein localises to the chloroplast. This Lepidium virginicum (Virginia pepperweed) protein is Small ribosomal subunit protein uS3c (rps3).